Here is a 209-residue protein sequence, read N- to C-terminus: Yop proteins translocation protein K (209 aa).

Its function is as follows. Belongs to an operon involved in the translocation of Yop proteins across the bacterial membranes or in the specific control of this function. The polypeptide is Yop proteins translocation protein K (yscK) (Yersinia enterocolitica).